We begin with the raw amino-acid sequence, 215 residues long: Probable nicotinate-nucleotide adenylyltransferase (215 aa).

Belongs to the NadD family.

The enzyme catalyses nicotinate beta-D-ribonucleotide + ATP + H(+) = deamido-NAD(+) + diphosphate. It functions in the pathway cofactor biosynthesis; NAD(+) biosynthesis; deamido-NAD(+) from nicotinate D-ribonucleotide: step 1/1. Catalyzes the reversible adenylation of nicotinate mononucleotide (NaMN) to nicotinic acid adenine dinucleotide (NaAD). This is Probable nicotinate-nucleotide adenylyltransferase from Coxiella burnetii (strain RSA 331 / Henzerling II).